The following is a 252-amino-acid chain: Geranylgeranylglyceryl phosphate synthase (252 aa).

Mg(2+)-binding residues include aspartate 22 and serine 51. Residues tyrosine 170–glycine 176, glycine 201–glycine 202, and glycine 223–serine 224 contribute to the sn-glycerol 1-phosphate site.

It belongs to the GGGP/HepGP synthase family. Group II subfamily. It depends on Mg(2+) as a cofactor.

The protein localises to the cytoplasm. The enzyme catalyses sn-glycerol 1-phosphate + (2E,6E,10E)-geranylgeranyl diphosphate = sn-3-O-(geranylgeranyl)glycerol 1-phosphate + diphosphate. It participates in membrane lipid metabolism; glycerophospholipid metabolism. Its function is as follows. Prenyltransferase that catalyzes the transfer of the geranylgeranyl moiety of geranylgeranyl diphosphate (GGPP) to the C3 hydroxyl of sn-glycerol-1-phosphate (G1P). This reaction is the first ether-bond-formation step in the biosynthesis of archaeal membrane lipids. In Thermoplasma volcanium (strain ATCC 51530 / DSM 4299 / JCM 9571 / NBRC 15438 / GSS1), this protein is Geranylgeranylglyceryl phosphate synthase.